A 417-amino-acid chain; its full sequence is Peptidyl-Asp metalloendopeptidase (417 aa).

The N-terminal stretch at 1-23 is a signal peptide; that stretch reads MKSKSMCTTVGLIAMCLAGSAAA. Position 331 (histidine 331) interacts with Zn(2+). Glutamate 332 is a catalytic residue. Positions 335 and 341 each coordinate Zn(2+).

The protein belongs to the peptidase M72 family. The cofactor is Zn(2+).

The catalysed reaction is Cleavage of Xaa-|-Asp, Xaa-|-Glu and Xaa-|-cysteic acid bonds.. Its function is as follows. Metalloprotease, specifically cleaves on the N-terminal side of aspartyl, glutamyl and cysteic acid residues. This Xanthomonas campestris pv. campestris (strain ATCC 33913 / DSM 3586 / NCPPB 528 / LMG 568 / P 25) protein is Peptidyl-Asp metalloendopeptidase.